The chain runs to 155 residues: Large ribosomal subunit protein uL13 (155 aa).

It belongs to the universal ribosomal protein uL13 family. As to quaternary structure, part of the 50S ribosomal subunit.

In terms of biological role, this protein is one of the early assembly proteins of the 50S ribosomal subunit, although it is not seen to bind rRNA by itself. It is important during the early stages of 50S assembly. In Aeropyrum pernix (strain ATCC 700893 / DSM 11879 / JCM 9820 / NBRC 100138 / K1), this protein is Large ribosomal subunit protein uL13.